Here is an 880-residue protein sequence, read N- to C-terminus: Leucine--tRNA ligase (880 aa).

A 'HIGH' region motif is present at residues 49–59 (PYPSGRIHMGH). Positions 638–642 (KMSKS) match the 'KMSKS' region motif. Lysine 641 contributes to the ATP binding site.

The protein belongs to the class-I aminoacyl-tRNA synthetase family.

The protein localises to the cytoplasm. It catalyses the reaction tRNA(Leu) + L-leucine + ATP = L-leucyl-tRNA(Leu) + AMP + diphosphate. The sequence is that of Leucine--tRNA ligase from Bartonella quintana (strain Toulouse) (Rochalimaea quintana).